Consider the following 371-residue polypeptide: Aminomethyltransferase (371 aa).

Belongs to the GcvT family. As to quaternary structure, the glycine cleavage system is composed of four proteins: P, T, L and H.

It carries out the reaction N(6)-[(R)-S(8)-aminomethyldihydrolipoyl]-L-lysyl-[protein] + (6S)-5,6,7,8-tetrahydrofolate = N(6)-[(R)-dihydrolipoyl]-L-lysyl-[protein] + (6R)-5,10-methylene-5,6,7,8-tetrahydrofolate + NH4(+). In terms of biological role, the glycine cleavage system catalyzes the degradation of glycine. This chain is Aminomethyltransferase, found in Cellvibrio japonicus (strain Ueda107) (Pseudomonas fluorescens subsp. cellulosa).